Here is a 401-residue protein sequence, read N- to C-terminus: NADH-ubiquinone oxidoreductase 49 kDa subunit (401 aa).

This sequence belongs to the complex I 49 kDa subunit family.

The protein localises to the mitochondrion. The enzyme catalyses a ubiquinone + NADH + 5 H(+)(in) = a ubiquinol + NAD(+) + 4 H(+)(out). Functionally, core subunit of the mitochondrial membrane respiratory chain NADH dehydrogenase (Complex I) that is believed to belong to the minimal assembly required for catalysis. Complex I functions in the transfer of electrons from NADH to the respiratory chain. The immediate electron acceptor for the enzyme is believed to be ubiquinone. Component of the iron-sulfur (IP) fragment of the enzyme. The polypeptide is NADH-ubiquinone oxidoreductase 49 kDa subunit (NAD7) (Acanthamoeba castellanii (Amoeba)).